The chain runs to 247 residues: uncharacterized protein (247 aa).

The N-acetyltransferase domain maps to 70-205 (ISLWMGPGNN…QKVPLEIMIR (136 aa)).

It belongs to the acetyltransferase family.

The protein localises to the endoplasmic reticulum. The protein resides in the golgi apparatus. Its subcellular location is the vacuole. This is an uncharacterized protein from Schizosaccharomyces pombe (strain 972 / ATCC 24843) (Fission yeast).